We begin with the raw amino-acid sequence, 424 residues long: 3-isopropylmalate dehydratase large subunit (424 aa).

[4Fe-4S] cluster contacts are provided by cysteine 299, cysteine 359, and cysteine 362.

It belongs to the aconitase/IPM isomerase family. LeuC type 2 subfamily. As to quaternary structure, heterodimer of LeuC and LeuD. It depends on [4Fe-4S] cluster as a cofactor.

The enzyme catalyses (2R,3S)-3-isopropylmalate = (2S)-2-isopropylmalate. It functions in the pathway amino-acid biosynthesis; L-leucine biosynthesis; L-leucine from 3-methyl-2-oxobutanoate: step 2/4. In terms of biological role, catalyzes the isomerization between 2-isopropylmalate and 3-isopropylmalate, via the formation of 2-isopropylmaleate. This chain is 3-isopropylmalate dehydratase large subunit, found in Hydrogenobaculum sp. (strain Y04AAS1).